A 567-amino-acid chain; its full sequence is Proline--tRNA ligase (567 aa).

It belongs to the class-II aminoacyl-tRNA synthetase family. ProS type 1 subfamily. In terms of assembly, homodimer.

It localises to the cytoplasm. The enzyme catalyses tRNA(Pro) + L-proline + ATP = L-prolyl-tRNA(Pro) + AMP + diphosphate. In terms of biological role, catalyzes the attachment of proline to tRNA(Pro) in a two-step reaction: proline is first activated by ATP to form Pro-AMP and then transferred to the acceptor end of tRNA(Pro). As ProRS can inadvertently accommodate and process non-cognate amino acids such as alanine and cysteine, to avoid such errors it has two additional distinct editing activities against alanine. One activity is designated as 'pretransfer' editing and involves the tRNA(Pro)-independent hydrolysis of activated Ala-AMP. The other activity is designated 'posttransfer' editing and involves deacylation of mischarged Ala-tRNA(Pro). The misacylated Cys-tRNA(Pro) is not edited by ProRS. The chain is Proline--tRNA ligase from Staphylococcus aureus (strain Mu3 / ATCC 700698).